A 176-amino-acid chain; its full sequence is Magnesium-dependent phosphatase 1 (176 aa).

Catalysis depends on D11, which acts as the Nucleophile. D11 is a binding site for Mg(2+). L12 and D13 together coordinate phosphate. Mg(2+) is bound at residue D13. The active-site Proton donor is the D13. W20 is a substrate binding site. 3 residues coordinate phosphate: S69, R70, and K100. R70 serves as a coordination point for substrate. A Mg(2+)-binding site is contributed by D123.

This sequence belongs to the HAD-like hydrolase superfamily. Mg(2+) is required as a cofactor.

The catalysed reaction is O-phospho-L-tyrosyl-[protein] + H2O = L-tyrosyl-[protein] + phosphate. Its activity is regulated as follows. Inhibited by vanadate and zinc, and slightly by calcium. Magnesium-dependent phosphatase which may act as a tyrosine phosphatase. This Homo sapiens (Human) protein is Magnesium-dependent phosphatase 1 (MDP1).